Here is a 405-residue protein sequence, read N- to C-terminus: Phosphoglycerate kinase (405 aa).

Residues 21–23 (DFN), Arg-36, 59–62 (HLGR), Arg-119, and Arg-161 each bind substrate. ATP contacts are provided by residues Lys-212, Gly-301, Glu-332, and 361 to 364 (GGDS).

Belongs to the phosphoglycerate kinase family. In terms of assembly, monomer.

The protein localises to the cytoplasm. It catalyses the reaction (2R)-3-phosphoglycerate + ATP = (2R)-3-phospho-glyceroyl phosphate + ADP. It functions in the pathway carbohydrate degradation; glycolysis; pyruvate from D-glyceraldehyde 3-phosphate: step 2/5. The chain is Phosphoglycerate kinase from Leuconostoc citreum (strain KM20).